The sequence spans 380 residues: Cytochrome b (380 aa).

4 helical membrane passes run 33–53, 77–98, 113–133, and 178–198; these read FGSL…FLAM, WLIR…YMHI, WNIG…GYVL, and FFAF…LHLL. Heme b contacts are provided by His-83 and His-97. Residues His-182 and His-196 each contribute to the heme b site. Position 201 (His-201) interacts with a ubiquinone. A run of 4 helical transmembrane segments spans residues 226–246, 288–308, 320–340, and 347–367; these read YKDL…ALFA, LGGV…PILH, LTQF…WIGG, and FIII…VLSP.

This sequence belongs to the cytochrome b family. In terms of assembly, the cytochrome bc1 complex contains 3 respiratory subunits (MT-CYB, CYC1 and UQCRFS1), 2 core proteins (UQCRC1 and UQCRC2) and probably 6 low-molecular weight proteins. Heme b serves as cofactor.

It localises to the mitochondrion inner membrane. Its function is as follows. Component of the ubiquinol-cytochrome c reductase complex (complex III or cytochrome b-c1 complex) that is part of the mitochondrial respiratory chain. The b-c1 complex mediates electron transfer from ubiquinol to cytochrome c. Contributes to the generation of a proton gradient across the mitochondrial membrane that is then used for ATP synthesis. This Oncorhynchus keta (Chum salmon) protein is Cytochrome b (mt-cyb).